The sequence spans 145 residues: Protein FimA (145 aa).

Belongs to the fimbrial protein family.

Its subcellular location is the fimbrium. The polypeptide is Protein FimA (fimA) (Bordetella pertussis).